Consider the following 278-residue polypeptide: Shikimate dehydrogenase (NADP(+)) (278 aa).

Shikimate contacts are provided by residues 19–21 (SRS) and threonine 66. Lysine 70 (proton acceptor) is an active-site residue. Positions 91 and 106 each coordinate shikimate. NADP(+)-binding positions include 129–133 (GAGGA) and phenylalanine 221. Shikimate is bound at residue tyrosine 223. Glycine 242 is an NADP(+) binding site.

The protein belongs to the shikimate dehydrogenase family. Homodimer.

The enzyme catalyses shikimate + NADP(+) = 3-dehydroshikimate + NADPH + H(+). It functions in the pathway metabolic intermediate biosynthesis; chorismate biosynthesis; chorismate from D-erythrose 4-phosphate and phosphoenolpyruvate: step 4/7. Functionally, involved in the biosynthesis of the chorismate, which leads to the biosynthesis of aromatic amino acids. Catalyzes the reversible NADPH linked reduction of 3-dehydroshikimate (DHSA) to yield shikimate (SA). The protein is Shikimate dehydrogenase (NADP(+)) of Anaeromyxobacter sp. (strain K).